The chain runs to 133 residues: MSNINLVQLVRDSLFTIGCPPSIITDLDSHSAITISLDSMPAINIALVNEQVMLWANFDAPSDVKLQSSAYNILNLMLMNFSYSINELVELHRSDEYLQLRVVIKDDYVHDGIVFAEILHEFYQRMEILNGVL.

Belongs to the SpaK family. In terms of assembly, homodimer.

Its function is as follows. Required for surface presentation of invasion plasmid antigens. Chaperone specialized in the storage of effectors within the bacterial cytoplasm, maintaining them in a secretion-competent state, and allowing their immediate delivery to target cells upon contact of the bacterium with the host cells. Has been shown to chaperone IpaA, IpgB1, OspC3 and probably also OspB. The sequence is that of Surface presentation of antigens protein SpaK (spaK) from Shigella flexneri.